The chain runs to 460 residues: Putative type II methyltransferase M.OihORF3336P (460 aa).

The SAM-dependent MTase C5-type domain maps to 15–458 (PEVVDLFSGC…EAMKKNIQGG (444 aa)). Cys97 is a catalytic residue.

This sequence belongs to the class I-like SAM-binding methyltransferase superfamily. C5-methyltransferase family.

The catalysed reaction is a 2'-deoxycytidine in DNA + S-adenosyl-L-methionine = a 5-methyl-2'-deoxycytidine in DNA + S-adenosyl-L-homocysteine + H(+). Its function is as follows. A methylase, recognizes the double-stranded sequence 5'-ACCGGT-3', methylates C-? on both strands. No endonuclease has been identified for this methylase. The protein is Putative type II methyltransferase M.OihORF3336P of Oceanobacillus iheyensis (strain DSM 14371 / CIP 107618 / JCM 11309 / KCTC 3954 / HTE831).